Reading from the N-terminus, the 178-residue chain is Small ribosomal subunit protein uS4 (178 aa).

Residues 104–166 enclose the S4 RNA-binding domain; it reads RRLQTIVYRK…PNSPMASENH (63 aa). The tract at residues 158 to 178 is disordered; the sequence is NSPMASENHPERTAAVSEENQ.

Belongs to the universal ribosomal protein uS4 family. As to quaternary structure, part of the 30S ribosomal subunit. Contacts protein S5. The interaction surface between S4 and S5 is involved in control of translational fidelity.

Its function is as follows. One of the primary rRNA binding proteins, it binds directly to 16S rRNA where it nucleates assembly of the body of the 30S subunit. Functionally, with S5 and S12 plays an important role in translational accuracy. This Methanococcus maripaludis (strain C5 / ATCC BAA-1333) protein is Small ribosomal subunit protein uS4.